Reading from the N-terminus, the 74-residue chain is Conotoxin Vt11.7 (74 aa).

An N-terminal signal peptide occupies residues 1–26; it reads MMFRLTSVGCFLLVIVLLNVAVLTNA. Disulfide bonds link C28-C42, C35-C47, C41-C51, and C46-C55. A propeptide spanning residues 62–74 is cleaved from the precursor; it reads AHGHGLLRFWGQR.

It belongs to the conotoxin I2 superfamily. As to expression, expressed by the venom duct.

The protein localises to the secreted. The protein is Conotoxin Vt11.7 of Conus planorbis (Planorbis cone).